Reading from the N-terminus, the 359-residue chain is MANVLVAMSGGVDSSLAAALLQEAGHQVTGVTMHLWDDDEQGLRESLCCAAEAATSARRVCALLGIPFYVFNYQREFRRHVIEYFIRAYTHGLTPNPCVECNRMIKFRALLDRARALGFDAVATGHYARIVRDDCGRYQLWRAVDTEKDQSYMLHMLGQADLARLLFPIGEYTKQQVREMAAARCLPSANREESQDICFVPDGDYRNLLRIEAPESLIPGPIVDLEGREIGRHRGLPLYTVGQRRGLGLGGGEPRYVVAIDPARNALIVGPVEALNRERFIVTDARWVDDAPPAETFHCQVQVRAHAEPLPARVSAQPDGRWLVELERPQRAVSPGQAAVFYDGVRVLGGGWIARPEVG.

ATP is bound by residues 7-14 and methionine 33; that span reads AMSGGVDS. The active-site Nucleophile is the cysteine 101. Cysteine 101 and cysteine 198 are disulfide-bonded. Residue glycine 125 participates in ATP binding. The interval 148–150 is interaction with tRNA; sequence KDQ. Cysteine 198 serves as the catalytic Cysteine persulfide intermediate.

Belongs to the MnmA/TRMU family.

It localises to the cytoplasm. It catalyses the reaction S-sulfanyl-L-cysteinyl-[protein] + uridine(34) in tRNA + AH2 + ATP = 2-thiouridine(34) in tRNA + L-cysteinyl-[protein] + A + AMP + diphosphate + H(+). Functionally, catalyzes the 2-thiolation of uridine at the wobble position (U34) of tRNA, leading to the formation of s(2)U34. This chain is tRNA-specific 2-thiouridylase MnmA, found in Chloroflexus aggregans (strain MD-66 / DSM 9485).